A 66-amino-acid chain; its full sequence is Small ribosomal subunit protein eS27 (66 aa).

C21, C24, C40, and C43 together coordinate Zn(2+). The C4-type zinc-finger motif lies at 21-43 (CPNCGNEQTVFSHATFPVRCLSC).

This sequence belongs to the eukaryotic ribosomal protein eS27 family. In terms of assembly, part of the 30S ribosomal subunit. It depends on Zn(2+) as a cofactor.

The protein is Small ribosomal subunit protein eS27 of Sulfurisphaera tokodaii (strain DSM 16993 / JCM 10545 / NBRC 100140 / 7) (Sulfolobus tokodaii).